Consider the following 570-residue polypeptide: Molecular chaperone MKKS (570 aa).

Position 192 to 199 (192 to 199) interacts with ATP; it reads GHIILGKS. A substrate-binding apical domain region spans residues 198 to 370; sequence KSLIVPLKGQ…FHLIPNEATI (173 aa).

The protein belongs to the TCP-1 chaperonin family. As to quaternary structure, component of a complex composed at least of MKKS, BBS10, BBS12, TCP1, CCT2, CCT3, CCT4, CCT5 and CCT8. Interacts with STUB1. Interacts with BBS2 (via coiled coil domain). Interacts with CCDC28B. Interacts with BBS12. Interacts with SMARCC1, a component of the SWI/SNF complexes; the interaction takes place predominantly in the cytoplasm and may modulate SMARCC1 location. Interacts with DLEC1.

It localises to the cytoplasm. The protein localises to the cytoskeleton. Its subcellular location is the microtubule organizing center. It is found in the centrosome. The protein resides in the cytosol. It localises to the nucleus. Its function is as follows. Probable molecular chaperone that assists the folding of proteins upon ATP hydrolysis. Plays a role in the assembly of BBSome, a complex involved in ciliogenesis regulating transports vesicles to the cilia. May play a role in protein processing in limb, cardiac and reproductive system development. May play a role in cytokinesis. The protein is Molecular chaperone MKKS (MKKS) of Pongo abelii (Sumatran orangutan).